The primary structure comprises 182 residues: ATP-dependent protease subunit HslV (182 aa).

Residue Thr-2 is part of the active site. 3 residues coordinate Na(+): Gly-157, Cys-160, and Thr-163.

Belongs to the peptidase T1B family. HslV subfamily. A double ring-shaped homohexamer of HslV is capped on each side by a ring-shaped HslU homohexamer. The assembly of the HslU/HslV complex is dependent on binding of ATP.

It localises to the cytoplasm. It catalyses the reaction ATP-dependent cleavage of peptide bonds with broad specificity.. With respect to regulation, allosterically activated by HslU binding. Functionally, protease subunit of a proteasome-like degradation complex believed to be a general protein degrading machinery. This Vibrio atlanticus (strain LGP32) (Vibrio splendidus (strain Mel32)) protein is ATP-dependent protease subunit HslV.